A 101-amino-acid chain; its full sequence is Protein Tat (101 aa).

Residues methionine 1–asparagine 24 form an interaction with human CREBBP region. Residues methionine 1–glycine 48 are transactivation. Zn(2+)-binding residues include cysteine 22, cysteine 25, and cysteine 27. Residues cysteine 22–cysteine 37 are cysteine-rich. Lysine 28 bears the N6-acetyllysine; by host PCAF mark. Zn(2+) contacts are provided by cysteine 30, histidine 33, cysteine 34, and cysteine 37. Residues phenylalanine 38–glycine 48 form a core region. The interval tyrosine 47–aspartate 101 is disordered. Residues arginine 49 to serine 57 carry the Nuclear localization signal, RNA-binding (TAR), and protein transduction motif. The segment at arginine 49–glutamate 86 is interaction with the host capping enzyme RNGTT. An N6-acetyllysine; by host EP300 and GCN5L2 mark is found at lysine 50 and lysine 51. An asymmetric dimethylarginine; by host PRMT6 mark is found at arginine 52 and arginine 53. A Glycyl lysine isopeptide (Lys-Gly) (interchain with G-Cter in ubiquitin) cross-link involves residue lysine 71. Positions arginine 78–aspartate 80 match the Cell attachment site motif. Residues glutamate 85–aspartate 101 are compositionally biased toward basic and acidic residues.

The protein belongs to the lentiviruses Tat family. In terms of assembly, interacts with host CCNT1. Associates with the P-TEFb complex composed at least of Tat, P-TEFb (CDK9 and CCNT1), TAR RNA, RNA Pol II. Recruits the HATs CREBBP, TAF1/TFIID, EP300, PCAF and GCN5L2. Interacts with host KAT5/Tip60; this interaction targets the latter to degradation. Interacts with the host deacetylase SIRT1. Interacts with host capping enzyme RNGTT; this interaction stimulates RNGTT. Binds to host KDR, and to the host integrins ITGAV/ITGB3 and ITGA5/ITGB1. Interacts with host KPNB1/importin beta-1 without previous binding to KPNA1/importin alpha-1. Interacts with EIF2AK2. Interacts with host nucleosome assembly protein NAP1L1; this interaction may be required for the transport of Tat within the nucleus, since the two proteins interact at the nuclear rim. Interacts with host C1QBP/SF2P32; this interaction involves lysine-acetylated Tat. Interacts with the host chemokine receptors CCR2, CCR3 and CXCR4. Interacts with host DPP4/CD26; this interaction may trigger an anti-proliferative effect. Interacts with host LDLR. Interacts with the host extracellular matrix metalloproteinase MMP1. Interacts with host PRMT6; this interaction mediates Tat's methylation. Interacts with, and is ubiquitinated by MDM2/Hdm2. Interacts with host PSMC3 and HTATIP2. Interacts with STAB1; this interaction may overcome SATB1-mediated repression of IL2 and IL2RA (interleukin) in T cells by binding to the same domain than HDAC1. Interacts (when acetylated) with human CDK13, thereby increasing HIV-1 mRNA splicing and promoting the production of the doubly spliced HIV-1 protein Nef. Interacts with host TBP; this interaction modulates the activity of transcriptional pre-initiation complex. Interacts with host RELA. Interacts with host PLSCR1; this interaction negatively regulates Tat transactivation activity by altering its subcellular distribution. Asymmetrical arginine methylation by host PRMT6 seems to diminish the transactivation capacity of Tat and affects the interaction with host CCNT1. In terms of processing, acetylation by EP300, CREBBP, GCN5L2/GCN5 and PCAF regulates the transactivation activity of Tat. EP300-mediated acetylation of Lys-50 promotes dissociation of Tat from the TAR RNA through the competitive binding to PCAF's bromodomain. In addition, the non-acetylated Tat's N-terminus can also interact with PCAF. PCAF-mediated acetylation of Lys-28 enhances Tat's binding to CCNT1. Lys-50 is deacetylated by SIRT1. Post-translationally, polyubiquitination by host MDM2 does not target Tat to degradation, but activates its transactivation function and fosters interaction with CCNT1 and TAR RNA. Phosphorylated by EIF2AK2 on serine and threonine residues adjacent to the basic region important for TAR RNA binding and function. Phosphorylation of Tat by EIF2AK2 is dependent on the prior activation of EIF2AK2 by dsRNA.

It localises to the host nucleus. It is found in the host nucleolus. The protein localises to the host cytoplasm. The protein resides in the secreted. Its function is as follows. Transcriptional activator that increases RNA Pol II processivity, thereby increasing the level of full-length viral transcripts. Recognizes a hairpin structure at the 5'-LTR of the nascent viral mRNAs referred to as the transactivation responsive RNA element (TAR) and recruits the cyclin T1-CDK9 complex (P-TEFb complex) that will in turn hyperphosphorylate the RNA polymerase II to allow efficient elongation. The CDK9 component of P-TEFb and other Tat-activated kinases hyperphosphorylate the C-terminus of RNA Pol II that becomes stabilized and much more processive. Other factors such as HTATSF1/Tat-SF1, SUPT5H/SPT5, and HTATIP2 are also important for Tat's function. Besides its effect on RNA Pol II processivity, Tat induces chromatin remodeling of proviral genes by recruiting the histone acetyltransferases (HATs) CREBBP, EP300 and PCAF to the chromatin. This also contributes to the increase in proviral transcription rate, especially when the provirus integrates in transcriptionally silent region of the host genome. To ensure maximal activation of the LTR, Tat mediates nuclear translocation of NF-kappa-B by interacting with host RELA. Through its interaction with host TBP, Tat may also modulate transcription initiation. Tat can reactivate a latently infected cell by penetrating in it and transactivating its LTR promoter. In the cytoplasm, Tat is thought to act as a translational activator of HIV-1 mRNAs. Functionally, extracellular circulating Tat can be endocytosed by surrounding uninfected cells via the binding to several surface receptors such as CD26, CXCR4, heparan sulfate proteoglycans (HSPG) or LDLR. Neurons are rarely infected, but they internalize Tat via their LDLR. Through its interaction with nuclear HATs, Tat is potentially able to control the acetylation-dependent cellular gene expression. Modulates the expression of many cellular genes involved in cell survival, proliferation or in coding for cytokines or cytokine receptors. Tat plays a role in T-cell and neurons apoptosis. Tat induced neurotoxicity and apoptosis probably contribute to neuroAIDS. Circulating Tat also acts as a chemokine-like and/or growth factor-like molecule that binds to specific receptors on the surface of the cells, affecting many cellular pathways. In the vascular system, Tat binds to ITGAV/ITGB3 and ITGA5/ITGB1 integrins dimers at the surface of endothelial cells and competes with bFGF for heparin-binding sites, leading to an excess of soluble bFGF. In Human immunodeficiency virus type 1 group M subtype C (isolate 92BR025) (HIV-1), this protein is Protein Tat.